The primary structure comprises 218 residues: Leucine-rich repeat protein 2 (218 aa).

The first 27 residues, 1–27, serve as a signal peptide directing secretion; sequence MVAQNSRRELLAASLILTLALIRLTEA. LRR repeat units follow at residues 69 to 93, 94 to 117, 119 to 141, 142 to 165, and 167 to 190; these read HHQVTRLDLGNSNLSGHLVPELGKL, EHLQYLELYKNEIQGTIPSELGNL, SLISLDLYNNNLTGKIPSSLGKL, KSLVFLRLNENRLTGPIPRELTVI, and SLKVVDVSGNDLCGTIPVEGPFEH.

In terms of biological role, probably involved in plant defense response. This is Leucine-rich repeat protein 2 from Arabidopsis thaliana (Mouse-ear cress).